We begin with the raw amino-acid sequence, 1706 residues long: PR domain zinc finger protein 2 (1706 aa).

Residues 27-140 form the SET domain; sequence EEVRLFPSAV…PGEELLVWYN (114 aa). The segment at 154 to 342 is disordered; the sequence is ERASARSKRS…TPPPHTPRAR (189 aa). Over residues 158 to 183 the composition is skewed to basic residues; it reads ARSKRSSPKSRRGKKKSHENKNKGIR. Positions 185-199 are enriched in polar residues; it reads HPTQLKASELDSTFA. Acidic residues predominate over residues 258 to 294; the sequence is TDCEVNDVEEEELEEEEELEEEEEEELGEDGVEEADM. Positions 299 to 313 are enriched in basic and acidic residues; the sequence is SAKEPEIRCEEKPED. C2H2-type zinc fingers lie at residues 355–377 and 385–407; these read FPCQHCERKFATKQGLERHMHIH and FKCKYCGKRFGTQINRRRHERRH. Disordered stretches follow at residues 400-446, 492-542, and 618-655; these read RRRH…QLGQ, RRHQ…EEEG, and LLKDSPSSTNCESKKRRTASPPVLPKIKTETESDSTAP. At S416 the chain carries Phosphoserine. Over residues 427–439 the composition is skewed to basic and acidic residues; it reads DGKGENVTSKDES. The C2H2-type 3 zinc finger occupies 476–499; that stretch reads HPCKYCKKVFGTHTNMRRHQRRVH. Residue S637 is modified to Phosphoserine. Glycyl lysine isopeptide (Lys-Gly) (interchain with G-Cter in SUMO2) cross-links involve residues K645, K684, and K686. 3 disordered regions span residues 724 to 794, 823 to 1075, and 1088 to 1112; these read TSSR…SPPC, SGVK…SSVV, and VTFKQEESESEGLKPKEEAPPAGGQ. A compositionally biased stretch (low complexity) spans 733–743; that stretch reads SSPPSSPQHSP. Residue S738 is modified to Phosphoserine. A Glycyl lysine isopeptide (Lys-Gly) (interchain with G-Cter in SUMO2) cross-link involves residue K769. Phosphoserine is present on residues S776, S780, and S791. Residues 823–832 show a composition bias toward polar residues; the sequence is SGVKQKSEGT. A compositionally biased stretch (basic and acidic residues) spans 846-863; that stretch reads SVHKKPCDSEGKEFKENH. Glycyl lysine isopeptide (Lys-Gly) (interchain with G-Cter in SUMO2) cross-links involve residues K860 and K870. 2 stretches are compositionally biased toward polar residues: residues 891–912 and 943–952; these read SLPTETTPEVTRSPSPCKSPDT and LQTASLSSGQ. Positions 962-983 are enriched in pro residues; the sequence is PSSPPPCPPVLTVATPPPPLLP. Residues 993 to 1009 are compositionally biased toward polar residues; sequence DASPQQCPSPFSNTTAQ. The segment covering 1010–1019 has biased composition (low complexity); that stretch reads SPLPILSPTV. The span at 1020–1030 shows a compositional bias: pro residues; the sequence is SPSPSPIPPVE. Low complexity predominate over residues 1034 to 1062; the sequence is SAASPGPPTLSSSSSSSSSFPSSSCSSTS. Residues 1091 to 1106 are compositionally biased toward basic and acidic residues; it reads KQEESESEGLKPKEEA. 3 C2H2-type zinc fingers span residues 1123 to 1145, 1151 to 1174, and 1180 to 1203; these read FICNVCESPFLSIKDLTKHLSVH, FKCEFCVQLFKVKTDLSEHRFLLH, and FVCSVCKKEFAFLCNLQQHQRDLH. Residues K1136 and K1140 each participate in a glycyl lysine isopeptide (Lys-Gly) (interchain with G-Cter in SUMO2) cross-link. The span at 1218–1227 shows a compositional bias: polar residues; it reads LRPQNFTDPS. The segment at 1218–1251 is disordered; that stretch reads LRPQNFTDPSKANVEHMPSLPEEPLETSREEELN. K1269 is covalently cross-linked (Glycyl lysine isopeptide (Lys-Gly) (interchain with G-Cter in SUMO2)). Residues 1321–1343 form a C2H2-type 7; atypical zinc finger; it reads IRCTKCGKGVDNMPELHKHILAC. The C2H2-type 8; atypical zinc-finger motif lies at 1443 to 1465; sequence HICPYCDREFTYIGSLNKHAAFS. The interval 1466–1563 is disordered; it reads CPKKPLSPSK…KKASSSSLRN (98 aa). Over residues 1474 to 1486 the composition is skewed to basic residues; it reads SKRKVSHSSKKGG. Residues 1487 to 1498 are compositionally biased toward low complexity; sequence HASSSSSDRNSS. Residues 1528–1544 show a composition bias toward polar residues; that stretch reads GPAQASLPSSSFRSRQN. The segment covering 1548-1563 has biased composition (low complexity); the sequence is AASVKSKKASSSSLRN.

Belongs to the class V-like SAM-binding methyltransferase superfamily. Binds to the retinoblastoma protein (RB). Interacts with GATA3.

The protein localises to the nucleus. It catalyses the reaction L-lysyl-[histone] + S-adenosyl-L-methionine = N(6)-methyl-L-lysyl-[histone] + S-adenosyl-L-homocysteine + H(+). The enzyme catalyses L-lysyl(9)-[histone H3] + 3 S-adenosyl-L-methionine = N(6),N(6),N(6)-trimethyl-L-lysyl(9)-[histone H3] + 3 S-adenosyl-L-homocysteine + 3 H(+). Functionally, S-adenosyl-L-methionine-dependent histone methyltransferase that specifically methylates 'Lys-9' of histone H3. May function as a DNA-binding transcription factor. Binds to the macrophage-specific TPA-responsive element (MTE) of the HMOX1 (heme oxygenase 1) gene and may act as a transcriptional activator of this gene. In Rattus norvegicus (Rat), this protein is PR domain zinc finger protein 2 (Prdm2).